We begin with the raw amino-acid sequence, 428 residues long: 3-phosphoshikimate 1-carboxyvinyltransferase (428 aa).

3-phosphoshikimate contacts are provided by Lys-21, Ser-22, and Arg-26. Lys-21 serves as a coordination point for phosphoenolpyruvate. Phosphoenolpyruvate-binding residues include Gly-92 and Arg-120. 3-phosphoshikimate contacts are provided by Ser-165, Gln-167, Asp-313, and Lys-340. Gln-167 lines the phosphoenolpyruvate pocket. The active-site Proton acceptor is Asp-313. 2 residues coordinate phosphoenolpyruvate: Arg-344 and Arg-386.

This sequence belongs to the EPSP synthase family. In terms of assembly, monomer.

It localises to the cytoplasm. The enzyme catalyses 3-phosphoshikimate + phosphoenolpyruvate = 5-O-(1-carboxyvinyl)-3-phosphoshikimate + phosphate. Its pathway is metabolic intermediate biosynthesis; chorismate biosynthesis; chorismate from D-erythrose 4-phosphate and phosphoenolpyruvate: step 6/7. Its function is as follows. Catalyzes the transfer of the enolpyruvyl moiety of phosphoenolpyruvate (PEP) to the 5-hydroxyl of shikimate-3-phosphate (S3P) to produce enolpyruvyl shikimate-3-phosphate and inorganic phosphate. This Carboxydothermus hydrogenoformans (strain ATCC BAA-161 / DSM 6008 / Z-2901) protein is 3-phosphoshikimate 1-carboxyvinyltransferase.